Consider the following 356-residue polypeptide: Nucleosome assembly protein 1;4 (356 aa).

Residues 34–88 (VNALKNKLQNLAGQHSDILETLTPQVRKRVDVLRELQSQHDELESHFFEERAALE) adopt a coiled-coil conformation. Positions 55 to 70 (LTPQVRKRVDVLRELQ) match the Nuclear export signal motif. The short motif at 230-235 (KKKPKK) is the Nuclear localization signal element. A disordered region spans residues 304-356 (FTGEAAEGDEFEDIEDDDDDDDDDDDEDDEDEEDEDDEEEEKSKKKSSALKVE). Residues 309–343 (AEGDEFEDIEDDDDDDDDDDDEDDEDEEDEDDEEE) are compositionally biased toward acidic residues. A compositionally biased stretch (basic residues) spans 347 to 356 (KKKSSALKVE).

The protein belongs to the nucleosome assembly protein (NAP) family. Can form homomeric and heteromeric protein complexes with NAP1;3. Binds histones H2A and H2B in vivo. Also able to bind histones H1 and H4 in vitro. Interacts with CYCB1;1 and with alpha tubulin.

Its subcellular location is the nucleus. It is found in the cytoplasm. Functionally, may modulate chromatin structure by regulation of nucleosome assembly/disassembly. Could function together with B-type cyclins in the regulation of microtubule dynamics. The protein is Nucleosome assembly protein 1;4 (NAP1;4) of Nicotiana tabacum (Common tobacco).